The primary structure comprises 289 residues: ATP synthase gamma chain (289 aa).

Belongs to the ATPase gamma chain family. As to quaternary structure, F-type ATPases have 2 components, CF(1) - the catalytic core - and CF(0) - the membrane proton channel. CF(1) has five subunits: alpha(3), beta(3), gamma(1), delta(1), epsilon(1). CF(0) has three main subunits: a, b and c.

The protein localises to the cell inner membrane. Functionally, produces ATP from ADP in the presence of a proton gradient across the membrane. The gamma chain is believed to be important in regulating ATPase activity and the flow of protons through the CF(0) complex. The chain is ATP synthase gamma chain from Acinetobacter baylyi (strain ATCC 33305 / BD413 / ADP1).